The following is a 281-amino-acid chain: MSTVINGRELADQMQAEIQKDVEKMTQQGIQPGLVVLLVGENPASQTYVRNKERAAAKIGILSKVEKLPETISEEELLAEIDKYNQDSRFHGILVQLPLPKHIDEEKILLAIDPKKDVDGFHPMNLGRLFVGKPEMIPCTPYGIMKMFEAYDIDLTGKRAVVIGRSNIVGKPMAQLLLMKNATVTIAHSKTEHLAEVAKEADILVVAIGRGHFVTKEFVKPGAVVIDVGMNRNQEGKLIGDVAFDEVSEIASYITPVPKGVGPMTITMLMYQTVEAAKKQK.

NADP(+) is bound by residues 164–166 (GRS) and S189.

This sequence belongs to the tetrahydrofolate dehydrogenase/cyclohydrolase family. In terms of assembly, homodimer.

The catalysed reaction is (6R)-5,10-methylene-5,6,7,8-tetrahydrofolate + NADP(+) = (6R)-5,10-methenyltetrahydrofolate + NADPH. It catalyses the reaction (6R)-5,10-methenyltetrahydrofolate + H2O = (6R)-10-formyltetrahydrofolate + H(+). Its pathway is one-carbon metabolism; tetrahydrofolate interconversion. Catalyzes the oxidation of 5,10-methylenetetrahydrofolate to 5,10-methenyltetrahydrofolate and then the hydrolysis of 5,10-methenyltetrahydrofolate to 10-formyltetrahydrofolate. The protein is Bifunctional protein FolD of Enterococcus faecalis (strain ATCC 700802 / V583).